The primary structure comprises 509 residues: Dihydrolipoyl dehydrogenase, mitochondrial (509 aa).

A mitochondrion-targeting transit peptide spans 1–35 (MQSWSRVYCSLAKRGHFNRISHGLQGLSAVPLRTY). Lys-66 carries the N6-acetyllysine; alternate modification. Lys-66 is modified (N6-succinyllysine; alternate). FAD is bound by residues 71-80 (EKNETLGGTC) and Lys-89. Cys-80 and Cys-85 are joined by a disulfide. 4 positions are modified to N6-acetyllysine; alternate: Lys-104, Lys-122, Lys-132, and Lys-143. Lys-104, Lys-122, Lys-132, and Lys-143 each carry N6-succinyllysine; alternate. Gly-154 provides a ligand contact to FAD. An N6-succinyllysine mark is found at Lys-159 and Lys-166. FAD is bound at residue 183 to 185 (TGS). NAD(+)-binding positions include 220 to 227 (GAGVIGVE) and Glu-243. Lys-273 and Lys-277 each carry N6-succinyllysine. Val-278 provides a ligand contact to NAD(+). Ser-285 and Ser-297 each carry phosphoserine. Residue Gly-314 participates in NAD(+) binding. Lys-346 is modified (N6-acetyllysine). Residues Asp-355 and 361–364 (MLAH) each bind FAD. Position 410 is an N6-acetyllysine; alternate (Lys-410). Residue Lys-410 is modified to N6-succinyllysine; alternate. N6-acetyllysine is present on residues Lys-417 and Lys-420. Lys-430 is modified (N6-succinyllysine). His-487 functions as the Proton acceptor in the catalytic mechanism. Phosphoserine is present on Ser-502. N6-acetyllysine; alternate is present on Lys-505. Lys-505 carries the N6-succinyllysine; alternate modification.

The protein belongs to the class-I pyridine nucleotide-disulfide oxidoreductase family. As to quaternary structure, homodimer. Part of the multimeric pyruvate dehydrogenase complex that contains multiple copies of pyruvate dehydrogenase (subunits PDHA (PDHA1 or PDHA2) and PDHB, E1), dihydrolipoamide acetyltransferase (DLAT, E2) and lipoamide dehydrogenase (DLD, E3). These subunits are bound to an inner core composed of about 48 DLAT and 12 PDHX molecules (by non covalent bonds). The 2-oxoglutarate dehydrogenase complex is composed of OGDH (2-oxoglutarate dehydrogenase; E1), DLST (dihydrolipoamide succinyltransferase; E2), DLD (dihydrolipoamide dehydrogenase; E3) and the assembly factor KGD4. It contains multiple copies of the three enzymatic components (E1, E2 and E3). In the nucleus, the 2-oxoglutarate dehydrogenase complex associates with KAT2A. Interacts with PDHX. It depends on FAD as a cofactor. Post-translationally, tyrosine phosphorylated.

It is found in the mitochondrion matrix. The protein localises to the nucleus. The protein resides in the cell projection. Its subcellular location is the cilium. It localises to the flagellum. It is found in the cytoplasmic vesicle. The protein localises to the secretory vesicle. The protein resides in the acrosome. The catalysed reaction is N(6)-[(R)-dihydrolipoyl]-L-lysyl-[protein] + NAD(+) = N(6)-[(R)-lipoyl]-L-lysyl-[protein] + NADH + H(+). Its activity is regulated as follows. Disruption of native heterodimer state inhibits primary dihydrolipoamide dehydrogenase activity and induces serine protease activity. In terms of biological role, lipoamide dehydrogenase is a component of the glycine cleavage system as well as an E3 component of three alpha-ketoacid dehydrogenase complexes (pyruvate-, alpha-ketoglutarate-, and branched-chain amino acid-dehydrogenase complex). The 2-oxoglutarate dehydrogenase complex is mainly active in the mitochondrion. A fraction of the 2-oxoglutarate dehydrogenase complex also localizes in the nucleus and is required for lysine succinylation of histones: associates with KAT2A on chromatin and provides succinyl-CoA to histone succinyltransferase KAT2A. In monomeric form may have additional moonlighting function as serine protease. Involved in the hyperactivation of spermatazoa during capacitation and in the spermatazoal acrosome reaction. The polypeptide is Dihydrolipoyl dehydrogenase, mitochondrial (DLD) (Homo sapiens (Human)).